A 324-amino-acid chain; its full sequence is Methenyltetrahydromethanopterin cyclohydrolase (324 aa).

Belongs to the MCH family.

It localises to the cytoplasm. It catalyses the reaction 5,10-methenyl-5,6,7,8-tetrahydromethanopterin + H2O = N(5)-formyl-5,6,7,8-tetrahydromethanopterin + H(+). It functions in the pathway one-carbon metabolism; formaldehyde degradation; formate from formaldehyde (H(4)MPT route): step 3/5. Functionally, catalyzes the hydrolysis of methenyl-H(4)MPT(+) to 5-formyl-H(4)MPT. This is Methenyltetrahydromethanopterin cyclohydrolase from Methylobacterium nodulans (strain LMG 21967 / CNCM I-2342 / ORS 2060).